The following is a 306-amino-acid chain: MAVVTMRELLESGVHFGHQTRRWNPKMKRFIFTERNGIYIIDLLQSLSYIDRAYEFVKETVAHGGSIMFVGTKKQAQEAIAEQATRVGMPYVNQRWLGGMLTNFSTVYKRLQRLKELELIDFEDVAASGLTKKELLVLSREKAKLEKTLGGIREMQKVPSAVWIVDTKKEHIAVGEARKLHIPVVAILDTNCDPDEVDYKIPGNDDAIRSVTLLTRVIADAVAEGLIARSGAATGDSKPGEKAAGEPLAEWERDLLEGDKKDETAAAAEVQTSAETEKVADAEKPAEAVAEAEAEAPAADADAEQA.

The interval 257-306 (EGDKKDETAAAAEVQTSAETEKVADAEKPAEAVAEAEAEAPAADADAEQA) is disordered. The span at 275 to 286 (ETEKVADAEKPA) shows a compositional bias: basic and acidic residues. Low complexity predominate over residues 287–300 (EAVAEAEAEAPAAD).

This sequence belongs to the universal ribosomal protein uS2 family.

The sequence is that of Small ribosomal subunit protein uS2 from Streptomyces griseus subsp. griseus (strain JCM 4626 / CBS 651.72 / NBRC 13350 / KCC S-0626 / ISP 5235).